A 61-amino-acid polypeptide reads, in one-letter code: DNA-binding protein 7a (61 aa).

A disordered region spans residues 37–61 (NGKTGRGAVSEKDAPKELLEKLEKK). The span at 45–61 (VSEKDAPKELLEKLEKK) shows a compositional bias: basic and acidic residues.

Belongs to the 7 kDa DNA-binding/endoribonuclease P2 family. Monomer.

It localises to the cytoplasm. Functionally, can constrain negative DNA supercoils. May be involved in maintaining the integrity of the genome at high temperature. This chain is DNA-binding protein 7a, found in Acidianus hospitalis (strain W1).